The chain runs to 234 residues: UPF0173 metal-dependent hydrolase R01310 (234 aa).

This sequence belongs to the UPF0173 family.

The polypeptide is UPF0173 metal-dependent hydrolase R01310 (Rhizobium meliloti (strain 1021) (Ensifer meliloti)).